The primary structure comprises 432 residues: ATP-dependent RNA helicase RhlB (432 aa).

The Q motif signature appears at 9 to 37 (KKFSDFALHPKVIEALEKKGFSNCTQIQA). The region spanning 40-219 (LPITVKGHDI…FEQMNNPEYV (180 aa)) is the Helicase ATP-binding domain. ATP is bound at residue 53 to 60 (AQTGTGKT). Residues 165–168 (DEAD) carry the DEAD box motif. A Helicase C-terminal domain is found at 245 to 390 (RLLQTLIEEE…VSKYNSDALL (146 aa)). The tract at residues 393 to 432 (LPEPKRRHRPRQGQPRRNNSAPRRGNNTQRNNRNKRPSHS) is disordered. Low complexity predominate over residues 404–423 (QGQPRRNNSAPRRGNNTQRN).

Belongs to the DEAD box helicase family. RhlB subfamily. In terms of assembly, component of the RNA degradosome, which is a multiprotein complex involved in RNA processing and mRNA degradation.

It is found in the cytoplasm. The enzyme catalyses ATP + H2O = ADP + phosphate + H(+). In terms of biological role, DEAD-box RNA helicase involved in RNA degradation. Has RNA-dependent ATPase activity and unwinds double-stranded RNA. The chain is ATP-dependent RNA helicase RhlB from Proteus mirabilis (strain HI4320).